A 460-amino-acid chain; its full sequence is Monocarboxylate transporter 12 (460 aa).

Residues 1 to 10 lie on the Cytoplasmic side of the membrane; sequence MTQEKRSLHK. 12 helical membrane-spanning segments follow: residues 11-31, 58-78, 86-106, 115-135, 148-168, 177-197, 246-266, 282-302, 329-349, 354-374, 376-396, and 406-426; these read TPPD…VTVC, AWIH…GSYV, VGII…SFAT, LGVL…AMVG, IAMS…QLLI, LLIL…MRPI, FIIL…PFVY, AFLM…FGWV, FLPI…FGYF, VALI…SSAL, VVFF…GWLV, and FLLS…AKII. Residues 427–460 lie on the Cytoplasmic side of the membrane; sequence NRIKKNPQATVVRSSDIKQEVWTNGDVSCLNAIS.

Belongs to the major facilitator superfamily. Monocarboxylate porter (TC 2.A.1.13) family.

Its subcellular location is the cell membrane. The protein resides in the basolateral cell membrane. It catalyses the reaction creatine(in) = creatine(out). The catalysed reaction is guanidinoacetate(in) = guanidinoacetate(out). Its function is as follows. Functions as a transporter for creatine and as well for its precursor guanidinoacetate. Transport of creatine and GAA is independent of resting membrane potential and extracellular Na(+), Cl(-), or pH. Contributes to the process of creatine biosynthesis and distribution. The sequence is that of Monocarboxylate transporter 12 (slc16a12) from Xenopus laevis (African clawed frog).